The primary structure comprises 326 residues: Balbiani ring protein 1 (326 aa).

Residues 1–33 (PSKSGPRPSKSGPRPSKSGPRPSKSGPRPSKSG) are compositionally biased toward low complexity. The segment at 1–119 (PSKSGPRPSK…RESPVCDDAM (119 aa)) is disordered. Over residues 34–51 (PRPEKCGSAMRKAEAEKC) the composition is skewed to basic and acidic residues. The span at 93-102 (VTPTPEVPTT) shows a compositional bias: low complexity. Residues 107–119 (SESRESPVCDDAM) are compositionally biased toward basic and acidic residues.

In terms of tissue distribution, salivary gland.

The protein localises to the secreted. Functionally, used by the larvae to construct a supramolecular structure, the larval tube. In Chironomus pallidivittatus (Midge), this protein is Balbiani ring protein 1 (BR1).